We begin with the raw amino-acid sequence, 211 residues long: Ion-translocating oxidoreductase complex subunit G (211 aa).

Residues 9–29 (GLTLAIFACATTGLVAMTQYL) form a helical membrane-spanning segment. Position 175 is an FMN phosphoryl threonine (threonine 175).

Belongs to the RnfG family. The complex is composed of six subunits: RnfA, RnfB, RnfC, RnfD, RnfE and RnfG. FMN is required as a cofactor.

The protein resides in the cell inner membrane. In terms of biological role, part of a membrane-bound complex that couples electron transfer with translocation of ions across the membrane. In Vibrio vulnificus (strain YJ016), this protein is Ion-translocating oxidoreductase complex subunit G.